The sequence spans 478 residues: Aspartyl/glutamyl-tRNA(Asn/Gln) amidotransferase subunit B (478 aa).

Belongs to the GatB/GatE family. GatB subfamily. In terms of assembly, heterotrimer of A, B and C subunits.

It carries out the reaction L-glutamyl-tRNA(Gln) + L-glutamine + ATP + H2O = L-glutaminyl-tRNA(Gln) + L-glutamate + ADP + phosphate + H(+). It catalyses the reaction L-aspartyl-tRNA(Asn) + L-glutamine + ATP + H2O = L-asparaginyl-tRNA(Asn) + L-glutamate + ADP + phosphate + 2 H(+). Its function is as follows. Allows the formation of correctly charged Asn-tRNA(Asn) or Gln-tRNA(Gln) through the transamidation of misacylated Asp-tRNA(Asn) or Glu-tRNA(Gln) in organisms which lack either or both of asparaginyl-tRNA or glutaminyl-tRNA synthetases. The reaction takes place in the presence of glutamine and ATP through an activated phospho-Asp-tRNA(Asn) or phospho-Glu-tRNA(Gln). In Syntrophotalea carbinolica (strain DSM 2380 / NBRC 103641 / GraBd1) (Pelobacter carbinolicus), this protein is Aspartyl/glutamyl-tRNA(Asn/Gln) amidotransferase subunit B.